We begin with the raw amino-acid sequence, 93 residues long: MSAETVTGHNEKAYALLKSDAEKIRKLIEVQLENLTMPQCPLYEEVLDTQMFGLSREIDFAIRLELIDEEQGKQLLSELERKLADLHEATVRK.

This sequence belongs to the UPF0358 family.

This chain is UPF0358 protein BH2626, found in Halalkalibacterium halodurans (strain ATCC BAA-125 / DSM 18197 / FERM 7344 / JCM 9153 / C-125) (Bacillus halodurans).